A 286-amino-acid chain; its full sequence is Bifunctional protein FolD (286 aa).

Residues 165 to 167, Ser190, and Val231 contribute to the NADP(+) site; that span reads GRS.

This sequence belongs to the tetrahydrofolate dehydrogenase/cyclohydrolase family. Homodimer.

It carries out the reaction (6R)-5,10-methylene-5,6,7,8-tetrahydrofolate + NADP(+) = (6R)-5,10-methenyltetrahydrofolate + NADPH. It catalyses the reaction (6R)-5,10-methenyltetrahydrofolate + H2O = (6R)-10-formyltetrahydrofolate + H(+). The protein operates within one-carbon metabolism; tetrahydrofolate interconversion. Its function is as follows. Catalyzes the oxidation of 5,10-methylenetetrahydrofolate to 5,10-methenyltetrahydrofolate and then the hydrolysis of 5,10-methenyltetrahydrofolate to 10-formyltetrahydrofolate. The sequence is that of Bifunctional protein FolD from Bacillus cereus (strain AH187).